The sequence spans 104 residues: Large ribosomal subunit protein uL23 (104 aa).

The protein belongs to the universal ribosomal protein uL23 family. As to quaternary structure, part of the 50S ribosomal subunit. Contacts protein L29, and trigger factor when it is bound to the ribosome.

In terms of biological role, one of the early assembly proteins it binds 23S rRNA. One of the proteins that surrounds the polypeptide exit tunnel on the outside of the ribosome. Forms the main docking site for trigger factor binding to the ribosome. This Neisseria meningitidis serogroup B (strain ATCC BAA-335 / MC58) protein is Large ribosomal subunit protein uL23.